Reading from the N-terminus, the 271-residue chain is Formamidopyrimidine-DNA glycosylase (271 aa).

Residue P2 is the Schiff-base intermediate with DNA of the active site. Catalysis depends on E3, which acts as the Proton donor. K57 acts as the Proton donor; for beta-elimination activity in catalysis. 3 residues coordinate DNA: H90, R109, and K151. The FPG-type zinc-finger motif lies at 236-270; it reads HVYGRGGETCTQCGNLLSEIKLGQRATVFCGLCQP. The Proton donor; for delta-elimination activity role is filled by R260.

This sequence belongs to the FPG family. Monomer. Zn(2+) is required as a cofactor.

It carries out the reaction Hydrolysis of DNA containing ring-opened 7-methylguanine residues, releasing 2,6-diamino-4-hydroxy-5-(N-methyl)formamidopyrimidine.. It catalyses the reaction 2'-deoxyribonucleotide-(2'-deoxyribose 5'-phosphate)-2'-deoxyribonucleotide-DNA = a 3'-end 2'-deoxyribonucleotide-(2,3-dehydro-2,3-deoxyribose 5'-phosphate)-DNA + a 5'-end 5'-phospho-2'-deoxyribonucleoside-DNA + H(+). In terms of biological role, involved in base excision repair of DNA damaged by oxidation or by mutagenic agents. Acts as a DNA glycosylase that recognizes and removes damaged bases. Has a preference for oxidized purines, such as 7,8-dihydro-8-oxoguanine (8-oxoG). Has AP (apurinic/apyrimidinic) lyase activity and introduces nicks in the DNA strand. Cleaves the DNA backbone by beta-delta elimination to generate a single-strand break at the site of the removed base with both 3'- and 5'-phosphates. In Shewanella loihica (strain ATCC BAA-1088 / PV-4), this protein is Formamidopyrimidine-DNA glycosylase.